Here is a 431-residue protein sequence, read N- to C-terminus: Phosphomethylpyrimidine synthase (431 aa).

Substrate-binding positions include asparagine 66, methionine 95, tyrosine 124, histidine 163, 185 to 187 (SRG), 226 to 229 (DGLR), and glutamate 265. Histidine 269 contributes to the Zn(2+) binding site. Tyrosine 292 serves as a coordination point for substrate. Residue histidine 333 coordinates Zn(2+). 3 residues coordinate [4Fe-4S] cluster: cysteine 408, cysteine 411, and cysteine 415.

Belongs to the ThiC family. The cofactor is [4Fe-4S] cluster.

The catalysed reaction is 5-amino-1-(5-phospho-beta-D-ribosyl)imidazole + S-adenosyl-L-methionine = 4-amino-2-methyl-5-(phosphooxymethyl)pyrimidine + CO + 5'-deoxyadenosine + formate + L-methionine + 3 H(+). Its pathway is cofactor biosynthesis; thiamine diphosphate biosynthesis. Functionally, catalyzes the synthesis of the hydroxymethylpyrimidine phosphate (HMP-P) moiety of thiamine from aminoimidazole ribotide (AIR) in a radical S-adenosyl-L-methionine (SAM)-dependent reaction. This Dehalococcoides mccartyi (strain ATCC BAA-2100 / JCM 16839 / KCTC 5957 / BAV1) protein is Phosphomethylpyrimidine synthase.